A 185-amino-acid polypeptide reads, in one-letter code: dCTP deaminase (185 aa).

Residues 108 to 113, 132 to 134, Q153, Y167, and Q177 contribute to the dCTP site; these read KSTYAR and TLE. Catalysis depends on E134, which acts as the Proton donor/acceptor.

It belongs to the dCTP deaminase family. Homotrimer.

It carries out the reaction dCTP + H2O + H(+) = dUTP + NH4(+). Its pathway is pyrimidine metabolism; dUMP biosynthesis; dUMP from dCTP (dUTP route): step 1/2. Its function is as follows. Catalyzes the deamination of dCTP to dUTP. This is dCTP deaminase from Pelagibacter ubique (strain HTCC1062).